Consider the following 847-residue polypeptide: MAKPLTDQEKRRQISIRGIVGVENVAELKKSFNRHLHFTLVKDRNVATTRDYYFALAHTVRDHLVGRWIRTQQHYYDKCPKRVYYLSLEFYMGRTLQNTMINLGLQNACDEAIYQLGLDIEELEEIEEDAGLGNGGLGRLAACFLDSMATLGLAAYGYGIRYEYGIFNQKIRDGWQVEEADDWLRYGNPWEKSRPEFMLPVHFYGKVEHTNTGTKWIDTQVVLALPYDTPVPGYMNNTVNTMRLWSARAPNDFNLRDFNVGDYIQAVLDRNLAENISRVLYPNDNFFEGKELRLKQEYFVVAATLQDIIRRFKASKFGSTRGAGTVFDAFPDQVAIQLNDTHPALAIPELMRIFVDIEKLPWSKAWELTQKTFAYTNHTVLPEALERWPVDLVEKLLPRHLEIIYEINQKHLDRIVALFPKDVDRLRRMSLIEEEGSKRINMAHLCIVGSHAVNGVAKIHSDIVKTKVFKDFSELEPDKFQNKTNGITPRRWLLLCNPGLAELIAEKIGEDYVKDLSQLTKLHSFLGDDVFLRELAKVKQENKLKFSQFLETEYKVKINPSSMFDVQVKRIHEYKRQLLNCLHVITMYNRIKKDPKKLFVPRTVIIGGKAAPGYHMAKMIIKLITSVADVVNNDPMVGSKLKVIFLENYRVSLAEKVIPATDLSEQISTAGTEASGTGNMKFMLNGALTIGTMDGANVEMAEEAGEENLFIFGMRIDDVAALDKKGYEAKEYYEALPELKLVIDQIDNGFFSPKQPDLFKDIINMLFYHDRFKVFADYEAYVKCQDKVSQLYMNPKAWNTMVLKNIAASGKFSSDRTIKEYAQNIWNVEPSDLKISLSNESNKVNGN.

Ala-2 carries the post-translational modification N-acetylalanine. The residue at position 15 (Ser-15) is a Phosphoserine; by PHK; in form phosphorylase a. AMP-binding positions include Asp-43–Asn-45, Tyr-76, and Arg-310. Lys-364 carries the post-translational modification N6-succinyllysine. Lys-470 carries the N6-acetyllysine modification. Phosphoserine occurs at positions 524, 561, and 639. Residue Lys-681 is modified to N6-(pyridoxal phosphate)lysine. Residue Lys-796 is modified to N6-acetyllysine.

Belongs to the glycogen phosphorylase family. In terms of assembly, homodimer; enzymatically active. Interacts with PPP1R3B; recruits the phosphatase PP1 which dephosphorylates and inactivates PYGL/glycogen phosphorylase. It depends on pyridoxal 5'-phosphate as a cofactor. Acetylation, which is up-regulated by glucose and insulin and down-regulated by glucagon, inhibits the glycogen phosphorylase activity by promoting PPP1R3B-mediated recruitment of phosphatase PP1 and Ser-15 dephosphorylation. In terms of processing, phosphorylation at Ser-15 converts inactive phosphorylase b into active phosphorylase a. Dephosphorylation of Ser-15 by phosphatase PP1 inactivates the enzyme.

Its subcellular location is the cytoplasm. The protein resides in the cytosol. The enzyme catalyses [(1-&gt;4)-alpha-D-glucosyl](n) + phosphate = [(1-&gt;4)-alpha-D-glucosyl](n-1) + alpha-D-glucose 1-phosphate. Its activity is regulated as follows. Allosterically regulated through the non-covalent binding of metabolites, being activated by AMP and inhibited by ATP, ADP, and glucose-6-phosphate. The activity is also controlled by post-translational modifications including phosphorylation and acetylation. Its function is as follows. Allosteric enzyme that catalyzes the rate-limiting step in glycogen catabolism, the phosphorolytic cleavage of glycogen to produce glucose-1-phosphate, and plays a central role in maintaining cellular and organismal glucose homeostasis. This Homo sapiens (Human) protein is Glycogen phosphorylase, liver form.